We begin with the raw amino-acid sequence, 345 residues long: Phosphate acyltransferase (345 aa).

This sequence belongs to the PlsX family. In terms of assembly, homodimer. Probably interacts with PlsY.

It is found in the cytoplasm. The catalysed reaction is a fatty acyl-[ACP] + phosphate = an acyl phosphate + holo-[ACP]. It functions in the pathway lipid metabolism; phospholipid metabolism. Functionally, catalyzes the reversible formation of acyl-phosphate (acyl-PO(4)) from acyl-[acyl-carrier-protein] (acyl-ACP). This enzyme utilizes acyl-ACP as fatty acyl donor, but not acyl-CoA. This Wolbachia sp. subsp. Drosophila simulans (strain wRi) protein is Phosphate acyltransferase.